Here is a 284-residue protein sequence, read N- to C-terminus: ATP phosphoribosyltransferase (284 aa).

The protein belongs to the ATP phosphoribosyltransferase family. Long subfamily. Requires Mg(2+) as cofactor.

Its subcellular location is the cytoplasm. The enzyme catalyses 1-(5-phospho-beta-D-ribosyl)-ATP + diphosphate = 5-phospho-alpha-D-ribose 1-diphosphate + ATP. It participates in amino-acid biosynthesis; L-histidine biosynthesis; L-histidine from 5-phospho-alpha-D-ribose 1-diphosphate: step 1/9. Its activity is regulated as follows. Feedback inhibited by histidine. Its function is as follows. Catalyzes the condensation of ATP and 5-phosphoribose 1-diphosphate to form N'-(5'-phosphoribosyl)-ATP (PR-ATP). Has a crucial role in the pathway because the rate of histidine biosynthesis seems to be controlled primarily by regulation of HisG enzymatic activity. The protein is ATP phosphoribosyltransferase of Methanococcoides burtonii (strain DSM 6242 / NBRC 107633 / OCM 468 / ACE-M).